Consider the following 100-residue polypeptide: UPF0251 protein swp_0615 (100 aa).

It belongs to the UPF0251 family.

This is UPF0251 protein swp_0615 from Shewanella piezotolerans (strain WP3 / JCM 13877).